The sequence spans 26 residues: AMP deaminase 1 (26 aa).

It belongs to the metallo-dependent hydrolases superfamily. Adenosine and AMP deaminases family. In terms of assembly, homotetramer.

It catalyses the reaction AMP + H2O + H(+) = IMP + NH4(+). Its pathway is purine metabolism; IMP biosynthesis via salvage pathway; IMP from AMP: step 1/1. Functionally, AMP deaminase plays a critical role in energy metabolism. This Gallus gallus (Chicken) protein is AMP deaminase 1 (AMPD1).